Reading from the N-terminus, the 201-residue chain is Small ribosomal subunit protein uS4 (201 aa).

Positions 22-47 (TGKELARRPYAPGDHGNDRRGKLSEY) are disordered. Residues 93-153 (RRLDNMVYRL…EKSKNLDVIK (61 aa)) form the S4 RNA-binding domain.

Belongs to the universal ribosomal protein uS4 family. As to quaternary structure, part of the 30S ribosomal subunit. Contacts protein S5. The interaction surface between S4 and S5 is involved in control of translational fidelity.

One of the primary rRNA binding proteins, it binds directly to 16S rRNA where it nucleates assembly of the body of the 30S subunit. Functionally, with S5 and S12 plays an important role in translational accuracy. The protein is Small ribosomal subunit protein uS4 of Limosilactobacillus fermentum (strain NBRC 3956 / LMG 18251) (Lactobacillus fermentum).